The sequence spans 439 residues: Sex-determination protein fem-3 (439 aa).

The disordered stretch occupies residues 21-45; the sequence is RRLKRKANDDDDDDETVRERVDDAE.

In terms of assembly, component of a complex containing fem-1, fem-2 and fem-3. Interacts with fem-1 and fem-2 (via N-terminus). Part of a E3 ubiquitin-protein ligase complex, at least composed of cul-2, elc-1, tra-1, fem-1, fem-2 and fem-3; mediates the ubiquitination and subsequent proteasomal degradation of tra-1. Interacts with tra-1. Interacts with sel-10. Interacts with tra-2.

In terms of biological role, required for male development. In XO (male) animals, fem-3 directs male differentiation in all tissues. In XX (hermaphrodite) animals, it specifies the first 80 or so germ cells to be sperm. Negatively regulates male development when bound to tra-2. Together with fem-2 associates with the CBC(fem-1) E3 ubiquitin-protein ligase complex which mediates the ubiquitination and subsequent proteasomal degradation of tra-1. In Caenorhabditis remanei (Caenorhabditis vulgaris), this protein is Sex-determination protein fem-3.